The sequence spans 149 residues: Large ribosomal subunit protein bL9 (149 aa).

This sequence belongs to the bacterial ribosomal protein bL9 family.

In terms of biological role, binds to the 23S rRNA. The protein is Large ribosomal subunit protein bL9 of Helicobacter pylori (strain HPAG1).